Here is a 356-residue protein sequence, read N- to C-terminus: Cyanide hydratase (356 aa).

One can recognise a CN hydrolase domain in the interval 6–285; sequence YKAAAVTSEP…DGLLFVDIDL (280 aa). The active-site Proton acceptor is Glu-46. The active site involves Lys-128. The active-site Nucleophile is the Cys-163.

Belongs to the carbon-nitrogen hydrolase superfamily. Nitrilase family. In terms of assembly, oligomer of dimers, forming left-handed helical fibers.

It carries out the reaction formamide = hydrogen cyanide + H2O. Functionally, catalyzes the hydration of cyanide to formamide. Degradation of cyanide may be important for plant pathogenic fungi in infection of cyanogenic plants. This is Cyanide hydratase from Leptosphaeria maculans (Blackleg fungus).